A 570-amino-acid polypeptide reads, in one-letter code: Urease subunit alpha (570 aa).

The Urease domain maps to 131-570 (GGMDSHIHFI…LPMAQRYFLF (440 aa)). 3 residues coordinate Ni(2+): His136, His138, and Lys219. Position 219 is an N6-carboxylysine (Lys219). Substrate is bound at residue His221. His248 and His274 together coordinate Ni(2+). His322 (proton donor) is an active-site residue. Asp362 serves as a coordination point for Ni(2+).

It belongs to the metallo-dependent hydrolases superfamily. Urease alpha subunit family. As to quaternary structure, heterotrimer of UreA (gamma), UreB (beta) and UreC (alpha) subunits. Three heterotrimers associate to form the active enzyme. Requires Ni cation as cofactor. Post-translationally, carboxylation allows a single lysine to coordinate two nickel ions.

It localises to the cytoplasm. The enzyme catalyses urea + 2 H2O + H(+) = hydrogencarbonate + 2 NH4(+). It functions in the pathway nitrogen metabolism; urea degradation; CO(2) and NH(3) from urea (urease route): step 1/1. This is Urease subunit alpha from Allorhizobium ampelinum (strain ATCC BAA-846 / DSM 112012 / S4) (Agrobacterium vitis (strain S4)).